The following is a 103-amino-acid chain: Large ribosomal subunit protein bL21 (103 aa).

The protein belongs to the bacterial ribosomal protein bL21 family. Part of the 50S ribosomal subunit. Contacts protein L20.

In terms of biological role, this protein binds to 23S rRNA in the presence of protein L20. The sequence is that of Large ribosomal subunit protein bL21 from Borreliella afzelii (strain PKo) (Borrelia afzelii).